The primary structure comprises 336 residues: Galectin-12 (336 aa).

Galectin domains follow at residues 49-183 and 212-336; these read YVTT…VGFL and CSHA…CVHS.

In terms of tissue distribution, not widely expressed. Predominantly expressed in adipose tissue.

It is found in the nucleus. Functionally, binds lactose. May participate in the apoptosis of adipocytes. The polypeptide is Galectin-12 (LGALS12) (Homo sapiens (Human)).